Reading from the N-terminus, the 873-residue chain is Alanine--tRNA ligase (873 aa).

Residues His559, His563, Cys661, and His665 each coordinate Zn(2+).

The protein belongs to the class-II aminoacyl-tRNA synthetase family. As to quaternary structure, homotetramer. Requires Zn(2+) as cofactor.

It localises to the cytoplasm. The catalysed reaction is tRNA(Ala) + L-alanine + ATP = L-alanyl-tRNA(Ala) + AMP + diphosphate. Functionally, catalyzes the attachment of alanine to tRNA(Ala) in a two-step reaction: alanine is first activated by ATP to form Ala-AMP and then transferred to the acceptor end of tRNA(Ala). Also edits incorrectly charged Ser-tRNA(Ala) and Gly-tRNA(Ala) via its editing domain. The protein is Alanine--tRNA ligase of Wigglesworthia glossinidia brevipalpis.